The chain runs to 299 residues: tRNA dimethylallyltransferase (299 aa).

10–17 contacts ATP; that stretch reads GPTAVGKT. Residue 12 to 17 participates in substrate binding; sequence TAVGKT. Residues 35 to 38 form an interaction with substrate tRNA region; sequence DSQQ.

It belongs to the IPP transferase family. As to quaternary structure, monomer. Requires Mg(2+) as cofactor.

It catalyses the reaction adenosine(37) in tRNA + dimethylallyl diphosphate = N(6)-dimethylallyladenosine(37) in tRNA + diphosphate. Catalyzes the transfer of a dimethylallyl group onto the adenine at position 37 in tRNAs that read codons beginning with uridine, leading to the formation of N6-(dimethylallyl)adenosine (i(6)A). This Streptococcus thermophilus (strain CNRZ 1066) protein is tRNA dimethylallyltransferase.